A 271-amino-acid polypeptide reads, in one-letter code: Glutamate racemase (271 aa).

Substrate contacts are provided by residues 12–13 (DS) and 44–45 (YG). The active-site Proton donor/acceptor is C75. 76 to 77 (NS) provides a ligand contact to substrate. C185 acts as the Proton donor/acceptor in catalysis. Position 186–187 (186–187 (TH)) interacts with substrate.

Belongs to the aspartate/glutamate racemases family.

It carries out the reaction L-glutamate = D-glutamate. It functions in the pathway cell wall biogenesis; peptidoglycan biosynthesis. In terms of biological role, provides the (R)-glutamate required for cell wall biosynthesis. The protein is Glutamate racemase of Mycobacterium bovis (strain ATCC BAA-935 / AF2122/97).